We begin with the raw amino-acid sequence, 458 residues long: Dihydrolipoyl dehydrogenase (458 aa).

Residues 30-38 (DKGKLGGTC), Lys47, and Ala112 each bind FAD. A disulfide bridge connects residues Cys38 and Cys43. NAD(+) is bound by residues 177–181 (GGGVI), Glu200, and 263–266 (AIGR). The FAD site is built by Asp305 and Ala313. The Proton acceptor role is filled by His437.

This sequence belongs to the class-I pyridine nucleotide-disulfide oxidoreductase family. In terms of assembly, homodimer. The cofactor is FAD.

The protein localises to the cytoplasm. It carries out the reaction N(6)-[(R)-dihydrolipoyl]-L-lysyl-[protein] + NAD(+) = N(6)-[(R)-lipoyl]-L-lysyl-[protein] + NADH + H(+). Its pathway is ketone degradation; acetoin degradation. The sequence is that of Dihydrolipoyl dehydrogenase (acoL) from Bacillus subtilis (strain 168).